A 116-amino-acid chain; its full sequence is NADH-ubiquinone oxidoreductase chain 3 (116 aa).

3 helical membrane passes run 4–24 (IIIIVLSILAVTAALVFAAHF), 56–76 (FFLVAILFLLFDLEIALLFPF), and 88–108 (VLYIATLFLAILLIGLIFEWT).

Belongs to the complex I subunit 3 family.

The protein localises to the mitochondrion membrane. It carries out the reaction a ubiquinone + NADH + 5 H(+)(in) = a ubiquinol + NAD(+) + 4 H(+)(out). Functionally, core subunit of the mitochondrial membrane respiratory chain NADH dehydrogenase (Complex I) that is believed to belong to the minimal assembly required for catalysis. Complex I functions in the transfer of electrons from NADH to the respiratory chain. The immediate electron acceptor for the enzyme is believed to be ubiquinone. This chain is NADH-ubiquinone oxidoreductase chain 3 (ND3), found in Pisaster ochraceus (Ochre sea star).